The primary structure comprises 613 residues: 4-hydroxy-3-methylbut-2-en-1-yl diphosphate synthase (flavodoxin) (613 aa).

[4Fe-4S] cluster-binding residues include Cys521, Cys524, Cys555, and Glu562.

It belongs to the IspG family. The cofactor is [4Fe-4S] cluster.

The catalysed reaction is (2E)-4-hydroxy-3-methylbut-2-enyl diphosphate + oxidized [flavodoxin] + H2O + 2 H(+) = 2-C-methyl-D-erythritol 2,4-cyclic diphosphate + reduced [flavodoxin]. It functions in the pathway isoprenoid biosynthesis; isopentenyl diphosphate biosynthesis via DXP pathway; isopentenyl diphosphate from 1-deoxy-D-xylulose 5-phosphate: step 5/6. Functionally, converts 2C-methyl-D-erythritol 2,4-cyclodiphosphate (ME-2,4cPP) into 1-hydroxy-2-methyl-2-(E)-butenyl 4-diphosphate. The protein is 4-hydroxy-3-methylbut-2-en-1-yl diphosphate synthase (flavodoxin) of Bacteroides thetaiotaomicron (strain ATCC 29148 / DSM 2079 / JCM 5827 / CCUG 10774 / NCTC 10582 / VPI-5482 / E50).